The primary structure comprises 454 residues: Probable diacyglycerol O-acyltransferase tgs2 (454 aa).

The Proton acceptor role is filled by H139.

The protein belongs to the long-chain O-acyltransferase family.

It catalyses the reaction an acyl-CoA + a 1,2-diacyl-sn-glycerol = a triacyl-sn-glycerol + CoA. It carries out the reaction a long chain fatty alcohol + a fatty acyl-CoA = a wax ester + CoA. The protein operates within glycerolipid metabolism; triacylglycerol biosynthesis. In terms of biological role, catalyzes the terminal and only committed step in triacylglycerol synthesis by using diacylglycerol and fatty acyl CoA as substrates. Required for storage lipid synthesis. The polypeptide is Probable diacyglycerol O-acyltransferase tgs2 (tgs2) (Mycobacterium tuberculosis (strain CDC 1551 / Oshkosh)).